Here is a 1940-residue protein sequence, read N- to C-terminus: Myosin-3 (1940 aa).

The Myosin N-terminal SH3-like domain maps to 33-82 (DAKTYCFVVDSKEEYAKGKIKSSQDGKVTVETEDNRTLVVKPEDVYAMNP). One can recognise a Myosin motor domain in the interval 86–779 (DRIEDMAMLT…LLGTLEEMRD (694 aa)). Lys130 bears the N6,N6,N6-trimethyllysine mark. ATP is bound at residue 179 to 186 (GESGAGKT). 2 actin-binding regions span residues 656–678 (LNKLMSNLRTTHPHFVRCIIPNE) and 758–772 (KFGHTKVFFKAGLLG). In terms of domain architecture, IQ spans 782–811 (LAKLITRTQAVCRGFLMRVEFQKMVQRRES). Residues 840–1933 (LLKSAETEKE…KTRDFTSSRM (1094 aa)) are a coiled coil.

Belongs to the TRAFAC class myosin-kinesin ATPase superfamily. Myosin family. In terms of assembly, muscle myosin is a hexameric protein that consists of 2 heavy chain subunits (MHC), 2 alkali light chain subunits (MLC) and 2 regulatory light chain subunits (MLC-2). As to expression, expressed in fetal bone, thymus, placenta, heart, brain, and liver.

It is found in the cytoplasm. The protein resides in the myofibril. Its function is as follows. Muscle contraction. The polypeptide is Myosin-3 (MYH3) (Homo sapiens (Human)).